The sequence spans 603 residues: Cholinesterase (603 aa).

Residues 1-29 (MQTQHTKVTQTHFLLWILLLCMPFGKSHT) form the signal peptide. An N-linked (GlcNAc...) asparagine glycan is attached at asparagine 86. Residues cysteine 94 and cysteine 121 are joined by a disulfide bond. A glycan (N-linked (GlcNAc...) asparagine) is linked at asparagine 135. 145–146 (GG) lines the substrate pocket. The Acyl-ester intermediate role is filled by serine 227. Serine 227 is subject to Phosphoserine. The N-linked (GlcNAc...) asparagine glycan is linked to asparagine 270. Cysteine 281 and cysteine 292 are disulfide-bonded. Glutamate 354 serves as the catalytic Charge relay system. N-linked (GlcNAc...) asparagine glycosylation occurs at asparagine 370. Cysteine 429 and cysteine 548 are joined by a disulfide. Histidine 467 serves as the catalytic Charge relay system. N-linked (GlcNAc...) asparagine glycosylation is found at asparagine 484, asparagine 510, and asparagine 515.

The protein belongs to the type-B carboxylesterase/lipase family. In terms of assembly, homotetramer; disulfide-linked. Dimer of dimers. Present in most cells except erythrocytes.

It is found in the secreted. The catalysed reaction is an acylcholine + H2O = a carboxylate + choline + H(+). Functionally, esterase with broad substrate specificity. Contributes to the inactivation of the neurotransmitter acetylcholine. Can degrade neurotoxic organophosphate esters. The chain is Cholinesterase (Bche) from Mus musculus (Mouse).